The following is a 504-amino-acid chain: Cytochrome P450 3A1 (504 aa).

Cys443 is a heme binding site.

It belongs to the cytochrome P450 family. The cofactor is heme.

It is found in the endoplasmic reticulum membrane. Its subcellular location is the microsome membrane. The enzyme catalyses an organic molecule + reduced [NADPH--hemoprotein reductase] + O2 = an alcohol + oxidized [NADPH--hemoprotein reductase] + H2O + H(+). Cytochromes P450 are a group of heme-thiolate monooxygenases. In liver microsomes, this enzyme is involved in an NADPH-dependent electron transport pathway. It oxidizes a variety of structurally unrelated compounds, including steroids, fatty acids, and xenobiotics. This Rattus norvegicus (Rat) protein is Cytochrome P450 3A1 (Cyp3a1).